Reading from the N-terminus, the 267-residue chain is Orotidine 5'-phosphate decarboxylase (267 aa).

Substrate is bound by residues Asp38, 60–62 (KTH), 92–101 (DRKFADIGNT), Tyr218, and Arg236. Lys94 acts as the Proton donor in catalysis.

It belongs to the OMP decarboxylase family.

The enzyme catalyses orotidine 5'-phosphate + H(+) = UMP + CO2. It participates in pyrimidine metabolism; UMP biosynthesis via de novo pathway; UMP from orotate: step 2/2. The protein is Orotidine 5'-phosphate decarboxylase (URA3) of Debaryomyces hansenii (strain ATCC 36239 / CBS 767 / BCRC 21394 / JCM 1990 / NBRC 0083 / IGC 2968) (Yeast).